We begin with the raw amino-acid sequence, 263 residues long: Proliferating cell nuclear antigen (263 aa).

Residues 61–80 (RCDRTINLGLSLANMSKALK) mediate DNA binding.

It belongs to the PCNA family. Homotrimer. Forms a complex with activator 1 heteropentamer in the presence of ATP.

It localises to the nucleus. In terms of biological role, this protein is an auxiliary protein of DNA polymerase delta and is involved in the control of eukaryotic DNA replication by increasing the polymerase's processibility during elongation of the leading strand. The protein is Proliferating cell nuclear antigen (pcn-1) of Caenorhabditis elegans.